Here is a 242-residue protein sequence, read N- to C-terminus: Uridylate kinase (242 aa).

An ATP-binding site is contributed by 16 to 19 (KVSG). Gly58 contributes to the UMP binding site. ATP is bound by residues Gly59 and Arg63. UMP-binding positions include Asp78 and 139–146 (TGNPFCTT). The ATP site is built by Thr166, Gln167, Tyr172, and Asp175.

This sequence belongs to the UMP kinase family. In terms of assembly, homohexamer.

It localises to the cytoplasm. The enzyme catalyses UMP + ATP = UDP + ADP. It participates in pyrimidine metabolism; CTP biosynthesis via de novo pathway; UDP from UMP (UMPK route): step 1/1. Its activity is regulated as follows. Inhibited by UTP. Functionally, catalyzes the reversible phosphorylation of UMP to UDP. This is Uridylate kinase from Rickettsia massiliae (strain Mtu5).